A 150-amino-acid chain; its full sequence is Deoxyuridine 5'-triphosphate nucleotidohydrolase (150 aa).

Residues 69-71 (RSG), Asn-82, 86-88 (LID), and Met-96 each bind substrate.

It belongs to the dUTPase family. It depends on Mg(2+) as a cofactor.

It catalyses the reaction dUTP + H2O = dUMP + diphosphate + H(+). It functions in the pathway pyrimidine metabolism; dUMP biosynthesis; dUMP from dCTP (dUTP route): step 2/2. Its function is as follows. This enzyme is involved in nucleotide metabolism: it produces dUMP, the immediate precursor of thymidine nucleotides and it decreases the intracellular concentration of dUTP so that uracil cannot be incorporated into DNA. This chain is Deoxyuridine 5'-triphosphate nucleotidohydrolase, found in Acinetobacter baylyi (strain ATCC 33305 / BD413 / ADP1).